A 244-amino-acid chain; its full sequence is Histone H1, orphon (244 aa).

A compositionally biased stretch (low complexity) spans 1–21 (MSDPAPEIEAPVEAAPVASPP). 2 disordered regions span residues 1–59 (MSDP…PVSE) and 113–244 (QAKG…KKAK). The segment covering 35–45 (PKAEKPKSDKP) has biased composition (basic and acidic residues). Residues 53-127 (THPPVSEMVV…GASGSFKLPP (75 aa)) form the H15 domain. The segment covering 186-203 (AKPASKKAAAPKPKAAKP) has biased composition (low complexity). The segment covering 213 to 244 (ATKAAAKKPVAKPVAKKPAAKPAKKPAAKKAK) has biased composition (basic residues).

This sequence belongs to the histone H1/H5 family.

Its subcellular location is the nucleus. It is found in the chromosome. Functionally, histones H1 are necessary for the condensation of nucleosome chains into higher-order structures. The sequence is that of Histone H1, orphon from Chironomus thummi thummi (Midge).